We begin with the raw amino-acid sequence, 242 residues long: Small ribosomal subunit protein uS2 (242 aa).

This sequence belongs to the universal ribosomal protein uS2 family.

The chain is Small ribosomal subunit protein uS2 from Shewanella pealeana (strain ATCC 700345 / ANG-SQ1).